The sequence spans 128 residues: Aspartate 1-decarboxylase (128 aa).

Serine 25 acts as the Schiff-base intermediate with substrate; via pyruvic acid in catalysis. Serine 25 is modified (pyruvic acid (Ser)). A substrate-binding site is contributed by threonine 57. The Proton donor role is filled by tyrosine 58. 73–75 provides a ligand contact to substrate; the sequence is GAA.

This sequence belongs to the PanD family. As to quaternary structure, heterooctamer of four alpha and four beta subunits. Pyruvate serves as cofactor. In terms of processing, is synthesized initially as an inactive proenzyme, which is activated by self-cleavage at a specific serine bond to produce a beta-subunit with a hydroxyl group at its C-terminus and an alpha-subunit with a pyruvoyl group at its N-terminus.

It localises to the cytoplasm. The catalysed reaction is L-aspartate + H(+) = beta-alanine + CO2. It functions in the pathway cofactor biosynthesis; (R)-pantothenate biosynthesis; beta-alanine from L-aspartate: step 1/1. Functionally, catalyzes the pyruvoyl-dependent decarboxylation of aspartate to produce beta-alanine. This is Aspartate 1-decarboxylase from Chlorobium limicola (strain DSM 245 / NBRC 103803 / 6330).